We begin with the raw amino-acid sequence, 213 residues long: Small ribosomal subunit protein uS7 (213 aa).

It belongs to the universal ribosomal protein uS7 family. Component of the small ribosomal subunit (SSU). Mature N.crassa ribosomes consist of a small (40S) and a large (60S) subunit. The 40S small subunit contains 1 molecule of ribosomal RNA (18S rRNA) and at least 32 different proteins. The large 60S subunit contains 3 rRNA molecules (26S, 5.8S and 5S rRNA) and at least 42 different proteins.

The protein localises to the cytoplasm. Component of the ribosome, a large ribonucleoprotein complex responsible for the synthesis of proteins in the cell. The small ribosomal subunit (SSU) binds messenger RNAs (mRNAs) and translates the encoded message by selecting cognate aminoacyl-transfer RNA (tRNA) molecules. The large subunit (LSU) contains the ribosomal catalytic site termed the peptidyl transferase center (PTC), which catalyzes the formation of peptide bonds, thereby polymerizing the amino acids delivered by tRNAs into a polypeptide chain. The nascent polypeptides leave the ribosome through a tunnel in the LSU and interact with protein factors that function in enzymatic processing, targeting, and the membrane insertion of nascent chains at the exit of the ribosomal tunnel. The polypeptide is Small ribosomal subunit protein uS7 (rps-5) (Neurospora crassa (strain ATCC 24698 / 74-OR23-1A / CBS 708.71 / DSM 1257 / FGSC 987)).